A 644-amino-acid chain; its full sequence is Translation factor guf1, mitochondrial (644 aa).

The transit peptide at 1-31 (MTLRRFSYTFQARILRGLQARPVFVLPSRSH) directs the protein to the mitochondrion. In terms of domain architecture, tr-type G spans 51 to 232 (VNIRNWAIIS…AIIQRVPHPI (182 aa)). Residues 60-67 (SHIDHGKS), 125-129 (DTPGH), and 179-182 (NKID) each bind GTP.

The protein belongs to the TRAFAC class translation factor GTPase superfamily. Classic translation factor GTPase family. LepA subfamily.

The protein resides in the mitochondrion inner membrane. It carries out the reaction GTP + H2O = GDP + phosphate + H(+). Promotes mitochondrial protein synthesis. May act as a fidelity factor of the translation reaction, by catalyzing a one-codon backward translocation of tRNAs on improperly translocated ribosomes. Binds to mitochondrial ribosomes in a GTP-dependent manner. This is Translation factor guf1, mitochondrial (guf1) from Schizosaccharomyces japonicus (strain yFS275 / FY16936) (Fission yeast).